The chain runs to 291 residues: Homoserine kinase (291 aa).

Position 79 to 89 (79 to 89 (PLARGLGSSSA)) interacts with ATP.

This sequence belongs to the GHMP kinase family. Homoserine kinase subfamily.

Its subcellular location is the cytoplasm. The enzyme catalyses L-homoserine + ATP = O-phospho-L-homoserine + ADP + H(+). Its pathway is amino-acid biosynthesis; L-threonine biosynthesis; L-threonine from L-aspartate: step 4/5. Catalyzes the ATP-dependent phosphorylation of L-homoserine to L-homoserine phosphate. In Leuconostoc citreum (strain KM20), this protein is Homoserine kinase.